The chain runs to 951 residues: Valine--tRNA ligase (951 aa).

Positions 42-52 (PNVTGSLHMGH) match the 'HIGH' region motif. Positions 554–558 (KMSKS) match the 'KMSKS' region motif. K557 is a binding site for ATP. Residues 882–951 (LIDKDAELAR…EEQKATIAAL (70 aa)) are a coiled coil.

Belongs to the class-I aminoacyl-tRNA synthetase family. ValS type 1 subfamily. In terms of assembly, monomer.

The protein resides in the cytoplasm. The catalysed reaction is tRNA(Val) + L-valine + ATP = L-valyl-tRNA(Val) + AMP + diphosphate. Catalyzes the attachment of valine to tRNA(Val). As ValRS can inadvertently accommodate and process structurally similar amino acids such as threonine, to avoid such errors, it has a 'posttransfer' editing activity that hydrolyzes mischarged Thr-tRNA(Val) in a tRNA-dependent manner. The polypeptide is Valine--tRNA ligase (Vibrio vulnificus (strain CMCP6)).